The chain runs to 292 residues: 2-dehydro-3-deoxygalactonokinase (292 aa).

It belongs to the DgoK family.

It catalyses the reaction 2-dehydro-3-deoxy-D-galactonate + ATP = 2-dehydro-3-deoxy-6-phospho-D-galactonate + ADP + H(+). It functions in the pathway carbohydrate acid metabolism; D-galactonate degradation; D-glyceraldehyde 3-phosphate and pyruvate from D-galactonate: step 2/3. This Escherichia coli (strain K12) protein is 2-dehydro-3-deoxygalactonokinase (dgoK).